The chain runs to 1305 residues: Junctional cadherin 5-associated protein (1305 aa).

Disordered regions lie at residues 13-86 (YKLS…PSTA), 120-151 (REQE…VGGR), 249-419 (GVPK…HTTA), 450-545 (KLDG…CEMQ), 575-604 (IPVK…EQSV), 616-795 (ALTG…SRQL), and 818-1005 (FNKE…GLSA). Composition is skewed to basic and acidic residues over residues 21-31 (APHEDDGERRQ), 69-82 (PESR…HGER), 120-129 (REQEAREDPG), and 140-151 (HPREGPWEVGGR). The segment covering 337–358 (GLEPPVYVPPPSYKSPPQPAAH) has biased composition (pro residues). Over residues 360-369 (CPEEAVSRHE) the composition is skewed to basic and acidic residues. Polar residues-rich tracts occupy residues 530–545 (LVSS…CEMQ) and 579–594 (SESQ…NDLK). The segment covering 595 to 604 (QSASLQEQSV) has biased composition (low complexity). A compositionally biased stretch (polar residues) spans 669 to 683 (QQTQTSFAHEPQSLQ). The segment covering 729–748 (SPKSQGSLSPSSNSAFSGSS) has biased composition (low complexity). Ser-841 carries the post-translational modification Phosphoserine. 2 stretches are compositionally biased toward basic and acidic residues: residues 878–889 (SKSESWSEEGRP) and 945–958 (AKPE…EQRE). Phosphoserine occurs at positions 1004, 1010, 1152, and 1239. Disordered stretches follow at residues 1062–1166 (GAQR…DVET) and 1234–1305 (SRAA…VERV). Positions 1276 to 1288 (ADGHPAARRENGG) are enriched in basic and acidic residues.

The protein localises to the cell junction. It is found in the adherens junction. This chain is Junctional cadherin 5-associated protein (JCAD), found in Bos taurus (Bovine).